Consider the following 60-residue polypeptide: Homeobox protein engrailed-like A (60 aa).

A DNA-binding region (homeobox) is located at residues 1 to 41; sequence ADQLARLRAEFQANRYLTEERRQNLARELSLNEAQIKIWFQ.

It belongs to the engrailed homeobox family.

It localises to the nucleus. The protein is Homeobox protein engrailed-like A of Myxine glutinosa (Atlantic hagfish).